Consider the following 141-residue polypeptide: Eukaryotic translation initiation factor 1A (141 aa).

Residues 1-15 (MPKNKGKGGKNRRRG) show a composition bias toward basic residues. The tract at residues 1 to 28 (MPKNKGKGGKNRRRGKNENEQKRELQFK) is disordered. Residues 16 to 28 (KNENEQKRELQFK) are compositionally biased toward basic and acidic residues. The S1-like domain occupies 21 to 95 (QKRELQFKEE…DKADVILRYN (75 aa)).

This sequence belongs to the eIF-1A family.

Its function is as follows. Seems to be required for maximal rate of protein biosynthesis. Enhances ribosome dissociation into subunits and stabilizes the binding of the initiator Met-tRNA(I) to 40 S ribosomal subunits. The sequence is that of Eukaryotic translation initiation factor 1A (eif1a) from Dictyostelium discoideum (Social amoeba).